We begin with the raw amino-acid sequence, 234 residues long: Synaptogyrin-4 (234 aa).

The 152-residue stretch at 18-169 folds into the MARVEL domain; it reads FLKRPKAITR…QAYLAFQELR (152 aa). 4 helical membrane passes run 25–45, 66–86, 104–124, and 145–165; these read ITRIFAGVFSLIVFSSLLTDG, CSIAVGAGLLAFLSSLAFLAL, LLDLILAVIWAGVWAVGFCFL, and AAITFSFFSILVWIFQAYLAF. A disordered region spans residues 191 to 226; it reads SPPSAASPVNTPTTGPHGPSYASSSLSPYLSTPKAP. Residues 209–221 show a composition bias toward low complexity; that stretch reads PSYASSSLSPYLS.

This sequence belongs to the synaptogyrin family.

The protein resides in the membrane. This chain is Synaptogyrin-4 (SYNGR4), found in Bos taurus (Bovine).